The chain runs to 286 residues: 4-hydroxybenzoate octaprenyltransferase (286 aa).

Helical transmembrane passes span 21-40, 95-115, 142-162, 167-187, 210-230, 235-255, and 266-286; these read GTLLLLWPCLMALMLAAGGM, ILFVILGLSAFGLVLLLNGLV, FLGIVWSWSIPMAYAAQTGEV, WWLFAANWCWTVAYDTMYAMV, QIIGLFQLAALACFIAAGWSA, LYGLGILTFVGFSTYQQMLIF, and FLNNNWAGLALFVGLGADYLI.

It belongs to the UbiA prenyltransferase family. It depends on Mg(2+) as a cofactor.

It is found in the cell inner membrane. The enzyme catalyses all-trans-octaprenyl diphosphate + 4-hydroxybenzoate = 4-hydroxy-3-(all-trans-octaprenyl)benzoate + diphosphate. It functions in the pathway cofactor biosynthesis; ubiquinone biosynthesis. Functionally, catalyzes the prenylation of para-hydroxybenzoate (PHB) with an all-trans polyprenyl group. Mediates the second step in the final reaction sequence of ubiquinone-8 (UQ-8) biosynthesis, which is the condensation of the polyisoprenoid side chain with PHB, generating the first membrane-bound Q intermediate 3-octaprenyl-4-hydroxybenzoate. The sequence is that of 4-hydroxybenzoate octaprenyltransferase from Shewanella baltica (strain OS223).